The chain runs to 297 residues: Bifunctional protein FolD 2 (297 aa).

Residues Gly-173–Ser-175, Ser-198, and Ile-239 each bind NADP(+).

This sequence belongs to the tetrahydrofolate dehydrogenase/cyclohydrolase family. As to quaternary structure, homodimer.

The enzyme catalyses (6R)-5,10-methylene-5,6,7,8-tetrahydrofolate + NADP(+) = (6R)-5,10-methenyltetrahydrofolate + NADPH. It carries out the reaction (6R)-5,10-methenyltetrahydrofolate + H2O = (6R)-10-formyltetrahydrofolate + H(+). Its pathway is one-carbon metabolism; tetrahydrofolate interconversion. Catalyzes the oxidation of 5,10-methylenetetrahydrofolate to 5,10-methenyltetrahydrofolate and then the hydrolysis of 5,10-methenyltetrahydrofolate to 10-formyltetrahydrofolate. The chain is Bifunctional protein FolD 2 from Sinorhizobium medicae (strain WSM419) (Ensifer medicae).